Consider the following 364-residue polypeptide: Uroporphyrinogen decarboxylase (364 aa).

Residues 28–32 (RQAGR), D78, Y160, T215, and H333 contribute to the substrate site.

It belongs to the uroporphyrinogen decarboxylase family. Homodimer.

The protein localises to the cytoplasm. It carries out the reaction uroporphyrinogen III + 4 H(+) = coproporphyrinogen III + 4 CO2. Its pathway is porphyrin-containing compound metabolism; protoporphyrin-IX biosynthesis; coproporphyrinogen-III from 5-aminolevulinate: step 4/4. Its function is as follows. Catalyzes the decarboxylation of four acetate groups of uroporphyrinogen-III to yield coproporphyrinogen-III. The sequence is that of Uroporphyrinogen decarboxylase from Burkholderia pseudomallei (strain 1106a).